The primary structure comprises 629 residues: tRNA uridine 5-carboxymethylaminomethyl modification enzyme MnmG (629 aa).

FAD contacts are provided by residues 13 to 18, V125, and S180; that span reads GGGHAG. Position 273–287 (273–287) interacts with NAD(+); sequence GPRYCPSIEDKVMRF. FAD is bound at residue Q370.

Belongs to the MnmG family. As to quaternary structure, homodimer. Heterotetramer of two MnmE and two MnmG subunits. FAD is required as a cofactor.

Its subcellular location is the cytoplasm. Its function is as follows. NAD-binding protein involved in the addition of a carboxymethylaminomethyl (cmnm) group at the wobble position (U34) of certain tRNAs, forming tRNA-cmnm(5)s(2)U34. This Shigella dysenteriae serotype 1 (strain Sd197) protein is tRNA uridine 5-carboxymethylaminomethyl modification enzyme MnmG.